Consider the following 254-residue polypeptide: Small ribosomal subunit protein uS2 (254 aa).

It belongs to the universal ribosomal protein uS2 family.

The chain is Small ribosomal subunit protein uS2 from Borrelia hermsii (strain HS1 / DAH).